Consider the following 656-residue polypeptide: UvrABC system protein B (656 aa).

One can recognise a Helicase ATP-binding domain in the interval 24 to 409 (QGVRNRTPSQ…QGHIVEQILR (386 aa)). Residue 37-44 (GTTGSGKT) coordinates ATP. A Beta-hairpin motif is present at residues 90–113 (YYDYYQPEAYIARNDTYIEKSLLI). A Helicase C-terminal domain is found at 426-589 (QVDDLLEEIR…ITPKPIIKAI (164 aa)). The UVR domain maps to 616–651 (EKLIKKYENLMLQAANAFRFDEAAQYRDKMKAAKEQ).

It belongs to the UvrB family. As to quaternary structure, forms a heterotetramer with UvrA during the search for lesions. Interacts with UvrC in an incision complex.

The protein localises to the cytoplasm. Functionally, the UvrABC repair system catalyzes the recognition and processing of DNA lesions. A damage recognition complex composed of 2 UvrA and 2 UvrB subunits scans DNA for abnormalities. Upon binding of the UvrA(2)B(2) complex to a putative damaged site, the DNA wraps around one UvrB monomer. DNA wrap is dependent on ATP binding by UvrB and probably causes local melting of the DNA helix, facilitating insertion of UvrB beta-hairpin between the DNA strands. Then UvrB probes one DNA strand for the presence of a lesion. If a lesion is found the UvrA subunits dissociate and the UvrB-DNA preincision complex is formed. This complex is subsequently bound by UvrC and the second UvrB is released. If no lesion is found, the DNA wraps around the other UvrB subunit that will check the other stand for damage. The protein is UvrABC system protein B of Chlamydia abortus (strain DSM 27085 / S26/3) (Chlamydophila abortus).